The following is a 316-amino-acid chain: Retinol dehydrogenase 12 (316 aa).

46 to 52 (GANTGIG) lines the NADP(+) pocket. Ser175 contributes to the substrate binding site. Tyr200 serves as the catalytic Proton acceptor.

Belongs to the short-chain dehydrogenases/reductases (SDR) family. As to expression, expressed in the inner segments of the photoreceptor in retina.

The catalysed reaction is all-trans-retinol + NADP(+) = all-trans-retinal + NADPH + H(+). It carries out the reaction 11-cis-retinol + NADP(+) = 11-cis-retinal + NADPH + H(+). It catalyses the reaction 9-cis-retinol + NADP(+) = 9-cis-retinal + NADPH + H(+). The enzyme catalyses a 4-hydroxynonen-1-ol + NADP(+) = a 4-hydroxynonenal + NADPH + H(+). The catalysed reaction is (E)-non-2-en-1-ol + NADP(+) = (E)-non-2-enal + NADPH + H(+). It carries out the reaction (Z)-non-6-en-1-ol + NADP(+) = (Z)-non-6-enal + NADPH + H(+). It catalyses the reaction nonan-1-ol + NADP(+) = nonanal + NADPH + H(+). Its pathway is cofactor metabolism; retinol metabolism. Its function is as follows. Retinoids dehydrogenase/reductase with a clear preference for NADP. Displays high activity towards 9-cis, 11-cis and all-trans-retinal. Shows very weak activity toward 13-cis-retinol. Also exhibits activity, albeit with lower affinity than for retinaldehydes, towards lipid peroxidation products (C9 aldehydes) such as 4-hydroxynonenal and trans-2-nonenal. Plays an important function in photoreceptor cells to detoxify 4-hydroxynonenal and potentially other toxic aldehyde products resulting from lipid peroxidation. Has no dehydrogenase activity towards steroids. This Mus musculus (Mouse) protein is Retinol dehydrogenase 12 (Rdh12).